We begin with the raw amino-acid sequence, 540 residues long: Cytochrome P450 monooxygenase ORF5 (540 aa).

Residues 48-68 (YHALGTAIALFACACAYALVA) traverse the membrane as a helical segment. N-linked (GlcNAc...) asparagine glycosylation is found at Asn376 and Asn460. Heme is bound at residue Cys483.

It belongs to the cytochrome P450 family. It depends on heme as a cofactor.

The protein resides in the membrane. It functions in the pathway sesquiterpene biosynthesis. Cytochrome P450 monooxygenase; part of the gene cluster that mediates the biosynthesis of PR-toxin, a bicyclic sesquiterpene belonging to the eremophilane class and acting as a mycotoxin. The first step of the pathway is catalyzed by the aristolochene synthase which performs the cyclization of trans,trans-farnesyl diphosphate (FPP) to the bicyclic sesquiterpene aristolochene. Following the formation of aristolochene, the non-oxygenated aristolochene is converted to the trioxygenated intermediate eremofortin B, via 7-epi-neopetasone. This conversion appears to involve three enzymes, a hydroxysterol oxidase-like enzyme, the quinone-oxidase prx3 that forms the quinone-type-structure in the bicyclic nucleus of aristolochene with the C8-oxo group and the C-3 hydroxyl group, and the P450 monooxygenase ORF6 that introduces the epoxide at the double bond between carbons 1 and 2. No monoxy or dioxy-intermediates have been reported to be released to the broth, so these three early oxidative reactions may be coupled together. Eremofortin B is further oxidized by another P450 monooxygenase, that introduces a second epoxide between carbons 7 and 11 prior to acetylation to eremofortin A by the acetyltransferase ORF8. The second epoxidation may be performed by a second P450 monooxygenase. After the acetylation step, eremofortin A is converted to eremofortin C and then to PR-toxin. First the conversion of eremofortin A to eremofortin C proceeds by oxidation of the side chain of the molecule at C-12 and is catalyzed by the short-chain oxidoreductase prx1. The cytochrome P450 monooxygenase ORF6 is probably also involved in this step. The primary alcohol formed at C-12 is finally oxidized by the short-chain alcohol dehydrogenase prx4 that forms PR-toxin. This chain is Cytochrome P450 monooxygenase ORF5, found in Penicillium roqueforti (strain FM164).